Here is a 316-residue protein sequence, read N- to C-terminus: Pantothenate kinase (316 aa).

An ATP-binding site is contributed by 95 to 102; sequence GSVAVGKS.

The protein belongs to the prokaryotic pantothenate kinase family.

Its subcellular location is the cytoplasm. It catalyses the reaction (R)-pantothenate + ATP = (R)-4'-phosphopantothenate + ADP + H(+). The protein operates within cofactor biosynthesis; coenzyme A biosynthesis; CoA from (R)-pantothenate: step 1/5. This chain is Pantothenate kinase, found in Shewanella baltica (strain OS195).